Reading from the N-terminus, the 146-residue chain is Acidic phospholipase A2 S5-32M (146 aa).

The first 19 residues, 1-19, serve as a signal peptide directing secretion; sequence MYPAHLLVLLAVCVSLLGA. Residues 20–27 constitute a propeptide that is removed on maturation; the sequence is ASIPPQPL. 7 disulfide bridges follow: Cys38/Cys98, Cys54/Cys145, Cys56/Cys72, Cys71/Cys126, Cys78/Cys119, Cys87/Cys112, and Cys105/Cys117. Tyr55, Gly57, and Gly59 together coordinate Ca(2+). His75 is an active-site residue. Asp76 is a binding site for Ca(2+). The active site involves Asp120.

The protein belongs to the phospholipase A2 family. Group I subfamily. D49 sub-subfamily. Ca(2+) serves as cofactor. In terms of tissue distribution, expressed by the venom gland.

The protein localises to the secreted. It catalyses the reaction a 1,2-diacyl-sn-glycero-3-phosphocholine + H2O = a 1-acyl-sn-glycero-3-phosphocholine + a fatty acid + H(+). Its function is as follows. Snake venom phospholipase A2 (PLA2) that inhibits collagen-induced platelet aggregation. PLA2 catalyzes the calcium-dependent hydrolysis of the 2-acyl groups in 3-sn-phosphoglycerides. This is Acidic phospholipase A2 S5-32M from Austrelaps superbus (Lowland copperhead snake).